The primary structure comprises 78 residues: Conotoxin TsMSGL-11 (78 aa).

The signal sequence occupies residues methionine 1–alanine 24. The propeptide occupies glycine 25–threonine 44. 3 disulfides stabilise this stretch: cysteine 51-cysteine 63, cysteine 55-cysteine 72, and cysteine 62-cysteine 76. Phenylalanine 77 carries the phenylalanine amide modification.

It belongs to the conotoxin O3 superfamily. Expressed by the venom duct.

The protein localises to the secreted. This Conus tessulatus (Tessellate cone) protein is Conotoxin TsMSGL-11.